Consider the following 124-residue polypeptide: Fluoride-specific ion channel FluC (124 aa).

4 consecutive transmembrane segments (helical) span residues methionine 1–alanine 21, glycine 37–leucine 57, glycine 69–valine 89, and leucine 99–leucine 119. Glycine 76 and threonine 79 together coordinate Na(+).

It belongs to the fluoride channel Fluc/FEX (TC 1.A.43) family.

The protein resides in the cell inner membrane. The enzyme catalyses fluoride(in) = fluoride(out). Its activity is regulated as follows. Na(+) is not transported, but it plays an essential structural role and its presence is essential for fluoride channel function. Functionally, fluoride-specific ion channel. Important for reducing fluoride concentration in the cell, thus reducing its toxicity. This chain is Fluoride-specific ion channel FluC, found in Pseudomonas putida (strain ATCC 700007 / DSM 6899 / JCM 31910 / BCRC 17059 / LMG 24140 / F1).